A 347-amino-acid polypeptide reads, in one-letter code: NADH-ubiquinone oxidoreductase chain 2 (347 aa).

11 helical membrane passes run Ser2 to Ile22, His25 to Thr45, Ala56 to Phe76, Phe96 to Pro116, Ile122 to Phe142, Leu149 to Gly169, Ile178 to Tyr197, Ile202 to Leu219, Met241 to Met261, Leu278 to Tyr298, and Ile326 to Leu346.

It belongs to the complex I subunit 2 family.

It localises to the mitochondrion inner membrane. The catalysed reaction is a ubiquinone + NADH + 5 H(+)(in) = a ubiquinol + NAD(+) + 4 H(+)(out). Functionally, core subunit of the mitochondrial membrane respiratory chain NADH dehydrogenase (Complex I) that is believed to belong to the minimal assembly required for catalysis. Complex I functions in the transfer of electrons from NADH to the respiratory chain. The immediate electron acceptor for the enzyme is believed to be ubiquinone. The protein is NADH-ubiquinone oxidoreductase chain 2 (MT-ND2) of Didelphis virginiana (North American opossum).